Consider the following 505-residue polypeptide: Chemotaxis regulatory protein ChePep (505 aa).

2 disordered regions span residues 154–403 and 420–465; these read EPNN…EDIP and EAVA…SSPL. 5 stretches are compositionally biased toward basic and acidic residues: residues 172–263, 289–311, 337–346, 359–373, and 386–398; these read EEVK…EKTQ, ENKE…EVVT, QAHELEKQEI, QDKE…KEET, and PQEK…HYES. Residues 440 to 451 are compositionally biased toward low complexity; that stretch reads TETSKNENNTET.

Interacts with CheZ; the interaction is essential for each other polar localization.

The protein resides in the cytoplasm. Functionally, plays an essential role in chemotaxis. Regulates flagellar rotation through the formation of a complex with chemotaxis protein CheZ. Plays a major role in colonization of the stomach. The chain is Chemotaxis regulatory protein ChePep from Helicobacter pylori (strain ATCC 700392 / 26695) (Campylobacter pylori).